A 276-amino-acid chain; its full sequence is NH(3)-dependent NAD(+) synthetase (276 aa).

39-46 (GLSGGVDS) lines the ATP pocket. Aspartate 45 contributes to the Mg(2+) binding site. Residue arginine 123 coordinates deamido-NAD(+). Threonine 143 provides a ligand contact to ATP. Glutamate 148 is a Mg(2+) binding site. Deamido-NAD(+) contacts are provided by lysine 156 and aspartate 163. Lysine 172 and serine 194 together coordinate ATP. 254–255 (HK) contributes to the deamido-NAD(+) binding site.

Belongs to the NAD synthetase family. As to quaternary structure, homodimer.

The catalysed reaction is deamido-NAD(+) + NH4(+) + ATP = AMP + diphosphate + NAD(+) + H(+). Its pathway is cofactor biosynthesis; NAD(+) biosynthesis; NAD(+) from deamido-NAD(+) (ammonia route): step 1/1. Functionally, catalyzes the ATP-dependent amidation of deamido-NAD to form NAD. Uses ammonia as a nitrogen source. This chain is NH(3)-dependent NAD(+) synthetase, found in Hyperthermus butylicus (strain DSM 5456 / JCM 9403 / PLM1-5).